The chain runs to 312 residues: Olfactory receptor 2H2 (312 aa).

Topologically, residues 1 to 23 (MVNQSSTPGFLLLGFSEHPGLER) are extracellular. A glycan (N-linked (GlcNAc...) asparagine) is linked at Asn3. Residues 24–47 (TLFVVVLTSYLLTLVGNTLIILLS) traverse the membrane as a helical segment. The Cytoplasmic portion of the chain corresponds to 48–55 (ALDPKLHS). Residues 56–77 (PMYFFLSNLSFLDLCFTTSCVP) traverse the membrane as a helical segment. Residues 78 to 98 (QMLVNLWGPKKTISFLDCSVQ) are Extracellular-facing. A disulfide bridge connects residues Cys95 and Cys187. The helical transmembrane segment at 99 to 118 (IFIFLSLGTTECILLTVMAF) threads the bilayer. Topologically, residues 119–137 (DRYVAVCQPLHYATIIHPR) are cytoplasmic. The helical transmembrane segment at 138–156 (LCWQLASVAWVIGLVESVV) threads the bilayer. Over 157 to 193 (QTPSTLHLPFCPDRQVDDFVCEVPALIRLSCEDTSYN) the chain is Extracellular. The helical transmembrane segment at 194–217 (EIQVAVASVFILVVPLSLILVSYG) threads the bilayer. Topologically, residues 218-234 (AITWAVLRINSAKGRRK) are cytoplasmic. Residues 235 to 257 (AFGTCSSHLTVVTLFYSSVIAVY) traverse the membrane as a helical segment. Residues 258 to 270 (LQPKNPYAQERGK) lie on the Extracellular side of the membrane. The helical transmembrane segment at 271–290 (FFGLFYAVGTPSLNPLIYTL) threads the bilayer. Residues 291 to 312 (RNKEVTRAFRRLLGKEMGLTQS) are Cytoplasmic-facing.

The protein belongs to the G-protein coupled receptor 1 family.

The protein resides in the cell membrane. Functionally, odorant receptor. The sequence is that of Olfactory receptor 2H2 (OR2H2) from Homo sapiens (Human).